The following is a 123-amino-acid chain: Fluoride-specific ion channel FluC 2 (123 aa).

The next 4 membrane-spanning stretches (helical) occupy residues 3–23 (LDGF…RMFI), 38–58 (ILIV…LNIT), 62–82 (LILF…SFIY), and 94–114 (LILL…FCLG). Glycine 72 and serine 75 together coordinate Na(+).

This sequence belongs to the fluoride channel Fluc/FEX (TC 1.A.43) family.

The protein localises to the cell inner membrane. The enzyme catalyses fluoride(in) = fluoride(out). Its activity is regulated as follows. Na(+) is not transported, but it plays an essential structural role and its presence is essential for fluoride channel function. Fluoride-specific ion channel. Important for reducing fluoride concentration in the cell, thus reducing its toxicity. The chain is Fluoride-specific ion channel FluC 2 from Prochlorococcus marinus subsp. pastoris (strain CCMP1986 / NIES-2087 / MED4).